The following is a 427-amino-acid chain: MTLWVLGLNHQTAPVELRERAAFAGEALPRALGSLRDTPQIAEAVLLSTCNRTELYAVADSAQALDQWLHAQAGDLQGYLYQHADAEAVRHLFRVATGLDSMVLGEPQILGQVKDAWSTARDHGLLGQRLDRLFQQTFSVAKRARTDTQVGANPVSVASAAVRLAQNAFARLDDSTVLLVGAGETIELAARHLSEGKVRRLLIANRTLAHAQELASRHGGVALPLTELDRHLGEADVVFSATAAREPVIHREMVAKALRARRHKPMLLFDLAVPRDIEAEVGTLNDAFLYTVDDLERAVEDNRRGRREAAAEAEAIIDLQVSRFIETQQASAHQAPLRQLRAFGEATRTELLERARQQLANGKPADEVLELLAHGLTNRLLHPPTAALRAAALSGDADLTRAAERLFPATPGYRHPPVRPDDADPAP.

Substrate contacts are provided by residues 49 to 52 (TCNR), S101, 106 to 108 (EPQ), and Q112. C50 serves as the catalytic Nucleophile. An NADP(+)-binding site is contributed by 181–186 (GAGETI). The interval 407-427 (FPATPGYRHPPVRPDDADPAP) is disordered. The span at 418 to 427 (VRPDDADPAP) shows a compositional bias: basic and acidic residues.

This sequence belongs to the glutamyl-tRNA reductase family. As to quaternary structure, homodimer.

It catalyses the reaction (S)-4-amino-5-oxopentanoate + tRNA(Glu) + NADP(+) = L-glutamyl-tRNA(Glu) + NADPH + H(+). It participates in porphyrin-containing compound metabolism; protoporphyrin-IX biosynthesis; 5-aminolevulinate from L-glutamyl-tRNA(Glu): step 1/2. Catalyzes the NADPH-dependent reduction of glutamyl-tRNA(Glu) to glutamate 1-semialdehyde (GSA). This is Glutamyl-tRNA reductase from Stenotrophomonas maltophilia (strain K279a).